A 587-amino-acid chain; its full sequence is 2-succinyl-5-enolpyruvyl-6-hydroxy-3-cyclohexene-1-carboxylate synthase (587 aa).

Belongs to the TPP enzyme family. MenD subfamily. Homodimer. Requires Mg(2+) as cofactor. It depends on Mn(2+) as a cofactor. Thiamine diphosphate is required as a cofactor.

It carries out the reaction isochorismate + 2-oxoglutarate + H(+) = 5-enolpyruvoyl-6-hydroxy-2-succinyl-cyclohex-3-ene-1-carboxylate + CO2. It participates in quinol/quinone metabolism; 1,4-dihydroxy-2-naphthoate biosynthesis; 1,4-dihydroxy-2-naphthoate from chorismate: step 2/7. The protein operates within cofactor biosynthesis; phylloquinone biosynthesis. Its function is as follows. Catalyzes the thiamine diphosphate-dependent decarboxylation of 2-oxoglutarate and the subsequent addition of the resulting succinic semialdehyde-thiamine pyrophosphate anion to isochorismate to yield 2-succinyl-5-enolpyruvyl-6-hydroxy-3-cyclohexene-1-carboxylate (SEPHCHC). This is 2-succinyl-5-enolpyruvyl-6-hydroxy-3-cyclohexene-1-carboxylate synthase from Prochlorococcus marinus (strain MIT 9301).